Consider the following 237-residue polypeptide: Urease accessory protein UreF (237 aa).

Belongs to the UreF family. In terms of assembly, ureD, UreF and UreG form a complex that acts as a GTP-hydrolysis-dependent molecular chaperone, activating the urease apoprotein by helping to assemble the nickel containing metallocenter of UreC. The UreE protein probably delivers the nickel.

Its subcellular location is the cytoplasm. Functionally, required for maturation of urease via the functional incorporation of the urease nickel metallocenter. This is Urease accessory protein UreF from Streptococcus thermophilus (strain ATCC BAA-250 / LMG 18311).